Consider the following 316-residue polypeptide: tRNA dimethylallyltransferase (316 aa).

17–24 is an ATP binding site; it reads GPTASGKT. A substrate-binding site is contributed by 19–24; it reads TASGKT. Interaction with substrate tRNA stretches follow at residues 42 to 45, 166 to 170, and 247 to 252; these read DSAL, QRLSR, and RCVGYR.

It belongs to the IPP transferase family. As to quaternary structure, monomer. Mg(2+) is required as a cofactor.

It catalyses the reaction adenosine(37) in tRNA + dimethylallyl diphosphate = N(6)-dimethylallyladenosine(37) in tRNA + diphosphate. Catalyzes the transfer of a dimethylallyl group onto the adenine at position 37 in tRNAs that read codons beginning with uridine, leading to the formation of N6-(dimethylallyl)adenosine (i(6)A). This chain is tRNA dimethylallyltransferase, found in Salmonella newport (strain SL254).